The sequence spans 312 residues: F-box protein At1g11270 (312 aa).

Residues 29-80 (SVVKLLLPHDVVGLILERLPVESLLRFKCVSNQWKSTIESQCFQERQLIRRM) enclose the F-box domain.

In Arabidopsis thaliana (Mouse-ear cress), this protein is F-box protein At1g11270.